The primary structure comprises 483 residues: NADPH:adrenodoxin oxidoreductase, mitochondrial (483 aa).

The N-terminal 14 residues, 1-14 (MSRYLARYMVSRYF), are a transit peptide targeting the mitochondrion. FAD-binding residues include alanine 32, aspartate 53, leucine 61, and leucine 97. Residues 169–172 (QGNV), 213–214 (RR), and glutamate 225 contribute to the NADP(+) site. Residues tryptophan 391 and 398–400 (GII) each bind FAD. Glycine 398 serves as a coordination point for NADP(+).

The protein belongs to the ferredoxin--NADP reductase type 1 family. FAD serves as cofactor.

It is found in the mitochondrion. It catalyses the reaction 2 reduced [adrenodoxin] + NADP(+) + H(+) = 2 oxidized [adrenodoxin] + NADPH. Functionally, associates in vitro with the adrenodoxin-like protein MFDX1 to form an efficient low potential electron transfer chain that is able to reduce cytochrome C. Functions as accessory mitochondrial protein involved with BIO2 in the plant biotin synthase reaction. The sequence is that of NADPH:adrenodoxin oxidoreductase, mitochondrial from Arabidopsis thaliana (Mouse-ear cress).